The following is a 792-amino-acid chain: Probable phosphoketolase (792 aa).

This sequence belongs to the XFP family. Requires thiamine diphosphate as cofactor.

The polypeptide is Probable phosphoketolase (Brucella melitensis biotype 1 (strain ATCC 23456 / CCUG 17765 / NCTC 10094 / 16M)).